A 185-amino-acid polypeptide reads, in one-letter code: Prorelaxin (185 aa).

An N-terminal signal peptide occupies residues 1 to 24 (MPRLFLFHLLGVCLLLNQFSRAVA). Cystine bridges form between C35–C172, C47–C185, and C171–C176. Positions 56-157 (SLNQEDAPLK…LRSLGLDTHS (102 aa)) are cleaved as a propeptide — connecting peptide.

It belongs to the insulin family. Heterodimer of a B chain and an A chain linked by two disulfide bonds.

The protein resides in the secreted. In terms of biological role, relaxin is an ovarian hormone that acts with estrogen to produce dilatation of the birth canal in many mammals. May be involved in remodeling of connective tissues during pregnancy, promoting growth of pubic ligaments and ripening of the cervix. The polypeptide is Prorelaxin (RLN) (Macaca mulatta (Rhesus macaque)).